Here is a 91-residue protein sequence, read N- to C-terminus: Cell division topological specificity factor (91 aa).

The protein belongs to the MinE family.

Prevents the cell division inhibition by proteins MinC and MinD at internal division sites while permitting inhibition at polar sites. This ensures cell division at the proper site by restricting the formation of a division septum at the midpoint of the long axis of the cell. The chain is Cell division topological specificity factor from Bradyrhizobium sp. (strain BTAi1 / ATCC BAA-1182).